Consider the following 432-residue polypeptide: Glutamate-1-semialdehyde 2,1-aminomutase (432 aa).

Lys-267 carries the N6-(pyridoxal phosphate)lysine modification.

This sequence belongs to the class-III pyridoxal-phosphate-dependent aminotransferase family. HemL subfamily. As to quaternary structure, homodimer. Pyridoxal 5'-phosphate serves as cofactor.

It is found in the cytoplasm. The enzyme catalyses (S)-4-amino-5-oxopentanoate = 5-aminolevulinate. The protein operates within porphyrin-containing compound metabolism; protoporphyrin-IX biosynthesis; 5-aminolevulinate from L-glutamyl-tRNA(Glu): step 2/2. In Syntrophus aciditrophicus (strain SB), this protein is Glutamate-1-semialdehyde 2,1-aminomutase.